A 77-amino-acid polypeptide reads, in one-letter code: MPSIKIRENEPFEIAIRRFKRACEKAGVLSEVRRREYYEKPTEERKRKAAAAIKRHLKKLSRERFALQNLRKGRPQQ.

It belongs to the bacterial ribosomal protein bS21 family.

The chain is Small ribosomal subunit protein bS21 from Methylococcus capsulatus (strain ATCC 33009 / NCIMB 11132 / Bath).